The primary structure comprises 187 residues: Large ribosomal subunit protein eL18B (187 aa).

Thr134 is subject to Phosphothreonine. Ser136 is modified (phosphoserine).

The protein belongs to the eukaryotic ribosomal protein eL18 family. Component of the large ribosomal subunit (LSU). Mature yeast ribosomes consist of a small (40S) and a large (60S) subunit. The 40S small subunit contains 1 molecule of ribosomal RNA (18S rRNA) and at least 33 different proteins. The large 60S subunit contains 3 rRNA molecules (25S, 5.8S and 5S rRNA) and at least 46 different proteins. eL18 interacts with NAP1.

The protein resides in the cytoplasm. Functionally, component of the ribosome, a large ribonucleoprotein complex responsible for the synthesis of proteins in the cell. The small ribosomal subunit (SSU) binds messenger RNAs (mRNAs) and translates the encoded message by selecting cognate aminoacyl-transfer RNA (tRNA) molecules. The large subunit (LSU) contains the ribosomal catalytic site termed the peptidyl transferase center (PTC), which catalyzes the formation of peptide bonds, thereby polymerizing the amino acids delivered by tRNAs into a polypeptide chain. The nascent polypeptides leave the ribosome through a tunnel in the LSU and interact with protein factors that function in enzymatic processing, targeting, and the membrane insertion of nascent chains at the exit of the ribosomal tunnel. This Schizosaccharomyces pombe (strain 972 / ATCC 24843) (Fission yeast) protein is Large ribosomal subunit protein eL18B (rpl1802).